The following is a 276-amino-acid chain: Sulfur carrier protein FdhD (276 aa).

C120 functions as the Cysteine persulfide intermediate in the catalytic mechanism.

Belongs to the FdhD family.

Its subcellular location is the cytoplasm. In terms of biological role, required for formate dehydrogenase (FDH) activity. Acts as a sulfur carrier protein that transfers sulfur from IscS to the molybdenum cofactor prior to its insertion into FDH. The polypeptide is Sulfur carrier protein FdhD (Bordetella bronchiseptica (strain ATCC BAA-588 / NCTC 13252 / RB50) (Alcaligenes bronchisepticus)).